A 137-amino-acid polypeptide reads, in one-letter code: Glutamate mutase sigma subunit (137 aa).

A B12-binding domain is found at 3-137 (EVNLVLGVIG…KALKEDLGLM (135 aa)). Adenosylcob(III)alamin is bound by residues 13-17 (ADVHA), His-16, 61-63 (SSL), and 93-97 (NLVVG).

It belongs to the methylaspartate mutase GlmS subunit family. As to quaternary structure, heterotetramer composed of 2 epsilon subunits (GlmE) and 2 sigma subunits (GlmS). GlmE exists as a homodimer and GlmS as a monomer. The cofactor is adenosylcob(III)alamin.

It catalyses the reaction (2S,3S)-3-methyl-L-aspartate = L-glutamate. It functions in the pathway amino-acid degradation; L-glutamate degradation via mesaconate pathway; acetate and pyruvate from L-glutamate: step 1/4. Catalyzes the carbon skeleton rearrangement of L-glutamate to L-threo-3-methylaspartate ((2S,3S)-3-methylaspartate). This chain is Glutamate mutase sigma subunit, found in Carboxydothermus hydrogenoformans (strain ATCC BAA-161 / DSM 6008 / Z-2901).